The chain runs to 536 residues: Lysosomal acid glucosylceramidase (536 aa).

An N-terminal signal peptide occupies residues 1–39; it reads MEFSSPSREECPKPLSRVSIMAGSLTGLLLLQAVSWASG. 2 disulfide bridges follow: cysteine 43/cysteine 55 and cysteine 57/cysteine 62. Asparagine 58, asparagine 98, and asparagine 185 each carry an N-linked (GlcNAc...) asparagine glycan. Catalysis depends on glutamate 274, which acts as the Proton donor. N-linked (GlcNAc...) asparagine glycosylation occurs at asparagine 309. Glutamate 379 functions as the Nucleophile in the catalytic mechanism. The N-linked (GlcNAc...) asparagine glycan is linked to asparagine 501.

It belongs to the glycosyl hydrolase 30 family. Interacts with saposin-C. Interacts with SCARB2. Interacts with TCP1. May interacts with SNCA; this interaction may inhibit the glucosylceramidase activity. Interacts with GRN; this interaction prevents aggregation of GBA1-SCARB2 complex via interaction with HSPA1A upon stress.

It is found in the lysosome membrane. The enzyme catalyses a beta-D-glucosyl-(1&lt;-&gt;1')-N-acylsphing-4-enine + H2O = an N-acylsphing-4-enine + D-glucose. It catalyses the reaction a beta-D-galactosyl-(1&lt;-&gt;1')-N-acylsphing-4-enine + H2O = an N-acylsphing-4-enine + D-galactose. The catalysed reaction is cholesteryl 3-beta-D-glucoside + H2O = cholesterol + D-glucose. It carries out the reaction a beta-D-glucosyl-(1&lt;-&gt;1')-N-acylsphing-4-enine + cholesterol = cholesteryl 3-beta-D-glucoside + an N-acylsphing-4-enine. The enzyme catalyses beta-D-glucosyl-N-(9Z-octadecenoyl)-sphing-4E-enine + cholesterol = N-(9Z-octadecenoyl)-sphing-4-enine + cholesteryl 3-beta-D-glucoside. It catalyses the reaction beta-D-glucosyl-(1&lt;-&gt;1')-N-hexadecanoylsphing-4-enine + cholesterol = cholesteryl 3-beta-D-glucoside + N-hexadecanoylsphing-4-enine. The catalysed reaction is beta-D-glucosyl-N-octanoylsphing-4E-enine + cholesterol = N-octanoylsphing-4-enine + cholesteryl 3-beta-D-glucoside. It carries out the reaction beta-D-glucosyl-N-dodecanoylsphing-4-enine + cholesterol = N-dodecanoylsphing-4-enine + cholesteryl 3-beta-D-glucoside. The enzyme catalyses beta-D-glucosyl-(1&lt;-&gt;1)-N-octadecanoylsphing-4-enine + cholesterol = N-octadecanoylsphing-4-enine + cholesteryl 3-beta-D-glucoside. It catalyses the reaction beta-D-glucosyl-(1&lt;-&gt;1')-N-(15Z-tetracosenoyl)-sphing-4-enine + cholesterol = N-(15Z-tetracosenoyl)-sphing-4-enine + cholesteryl 3-beta-D-glucoside. The catalysed reaction is a beta-D-galactosyl-(1&lt;-&gt;1')-N-acylsphing-4-enine + cholesterol = cholesteryl 3-beta-D-galactoside + an N-acylsphing-4-enine. It carries out the reaction 1-(beta-D-galactosyl)-N-dodecanoylsphing-4-enine + cholesterol = cholesteryl 3-beta-D-galactoside + N-dodecanoylsphing-4-enine. The enzyme catalyses a beta-D-xylosyl-(1&lt;-&gt;1')-N-acylsphing-4-enine + cholesterol = cholesteryl 3-beta-D-xyloside + an N-acylsphing-4-enine. It catalyses the reaction beta-D-xylosyl-(1&lt;-&gt;1')-N-(9Z-octadecenoyl)-sphing-4-enine + cholesterol = cholesteryl 3-beta-D-xyloside + N-(9Z-octadecenoyl)-sphing-4-enine. Its pathway is steroid metabolism; cholesterol metabolism. The protein operates within sphingolipid metabolism. Synergistically activated by saposin-A and saposin-C, two saposin peptides produced by proteolytic processing of prosaposin/PSAP. Saposin-C activates GBA1 through its recruitment to membranes. The membrane structure and composition in anionic phospholipids are also important for the activation. Activated by PKC in the salvage pathway of ceramide formation. Inhibited by conduritol B epoxide/CBE. Functionally, glucosylceramidase that catalyzes, within the lysosomal compartment, the hydrolysis of glucosylceramides/GlcCers (such as beta-D-glucosyl-(1&lt;-&gt;1')-N-acylsphing-4-enine) into free ceramides (such as N-acylsphing-4-enine) and glucose. Plays a central role in the degradation of complex lipids and the turnover of cellular membranes. Through the production of ceramides, participates in the PKC-activated salvage pathway of ceramide formation. Catalyzes the glucosylation of cholesterol, through a transglucosylation reaction where glucose is transferred from GlcCer to cholesterol. GlcCer containing mono-unsaturated fatty acids (such as beta-D-glucosyl-N-(9Z-octadecenoyl)-sphing-4-enine) are preferred as glucose donors for cholesterol glucosylation when compared with GlcCer containing same chain length of saturated fatty acids (such as beta-D-glucosyl-N-octadecanoyl-sphing-4-enine). Under specific conditions, may alternatively catalyze the reverse reaction, transferring glucose from cholesteryl 3-beta-D-glucoside to ceramide. Can also hydrolyze cholesteryl 3-beta-D-glucoside producing glucose and cholesterol. Catalyzes the hydrolysis of galactosylceramides/GalCers (such as beta-D-galactosyl-(1&lt;-&gt;1')-N-acylsphing-4-enine), as well as the transfer of galactose between GalCers and cholesterol in vitro, but with lower activity than with GlcCers. Contrary to GlcCer and GalCer, xylosylceramide/XylCer (such as beta-D-xyosyl-(1&lt;-&gt;1')-N-acylsphing-4-enine) is not a good substrate for hydrolysis, however it is a good xylose donor for transxylosylation activity to form cholesteryl 3-beta-D-xyloside. In Homo sapiens (Human), this protein is Lysosomal acid glucosylceramidase.